Reading from the N-terminus, the 249-residue chain is Acetylglutamate kinase (249 aa).

Residues 38-39, Arg-60, and Asn-147 contribute to the substrate site; that span reads GG.

It belongs to the acetylglutamate kinase family. ArgB subfamily.

The protein resides in the cytoplasm. It carries out the reaction N-acetyl-L-glutamate + ATP = N-acetyl-L-glutamyl 5-phosphate + ADP. The protein operates within amino-acid biosynthesis; L-arginine biosynthesis; N(2)-acetyl-L-ornithine from L-glutamate: step 2/4. Its function is as follows. Catalyzes the ATP-dependent phosphorylation of N-acetyl-L-glutamate. The sequence is that of Acetylglutamate kinase from Deinococcus radiodurans (strain ATCC 13939 / DSM 20539 / JCM 16871 / CCUG 27074 / LMG 4051 / NBRC 15346 / NCIMB 9279 / VKM B-1422 / R1).